Consider the following 192-residue polypeptide: Adenylate kinase (192 aa).

10–15 (GAGKGT) is an ATP binding site. Residues 30 to 56 (GTGGMLRALEPESGEQIHLRIDRGHFA) form an NMP region. AMP is bound by residues Thr-31, Arg-36, 82-85 (GFPR), and Gln-89. Residues 123 to 133 (KRGETENRADD) form an LID region. Arg-124 contacts ATP. AMP is bound by residues Arg-130 and Arg-141. Asp-169 contributes to the ATP binding site.

This sequence belongs to the adenylate kinase family. As to quaternary structure, monomer.

It localises to the cytoplasm. The enzyme catalyses AMP + ATP = 2 ADP. It functions in the pathway purine metabolism; AMP biosynthesis via salvage pathway; AMP from ADP: step 1/1. In terms of biological role, catalyzes the reversible transfer of the terminal phosphate group between ATP and AMP. Plays an important role in cellular energy homeostasis and in adenine nucleotide metabolism. The chain is Adenylate kinase from Rhodopirellula baltica (strain DSM 10527 / NCIMB 13988 / SH1).